A 298-amino-acid chain; its full sequence is Homoserine kinase (298 aa).

Position 83-93 (83-93 (PISRGLGSSSS)) interacts with ATP.

This sequence belongs to the GHMP kinase family. Homoserine kinase subfamily.

Its subcellular location is the cytoplasm. It catalyses the reaction L-homoserine + ATP = O-phospho-L-homoserine + ADP + H(+). Its pathway is amino-acid biosynthesis; L-threonine biosynthesis; L-threonine from L-aspartate: step 4/5. Its function is as follows. Catalyzes the ATP-dependent phosphorylation of L-homoserine to L-homoserine phosphate. This is Homoserine kinase from Clostridium botulinum (strain Alaska E43 / Type E3).